The following is a 117-amino-acid chain: Circadian clock oscillator protein KaiB (117 aa).

This sequence belongs to the KaiB family. As to quaternary structure, may undergo a major conformational rearrangment; in the free state forms homooligomers. When bound to KaiC switches to a monomeric thioredoxin-fold (KaiB(fs)). The active oscillator complex is probably KaiC(6):KaiB(6).

Its function is as follows. Component of the KaiBC clock protein complex, which constitutes the main circadian regulator in cyanobacteria; it may modify the ATPase activity of KaiC. May be a metamorphic protein which reversibly switches between an inactive tetrameric fold and a rare, thioredoxin-like monomeric fold (KaiB(fs)). KaiB(fs) binds phospho-KaiC, and perhaps clock output effectors. The sequence is that of Circadian clock oscillator protein KaiB from Prochlorococcus marinus (strain SARG / CCMP1375 / SS120).